The following is a 76-amino-acid chain: DNA-directed RNA polymerase subunit omega (76 aa).

Belongs to the RNA polymerase subunit omega family. In terms of assembly, in cyanobacteria the RNAP catalytic core is composed of 2 alpha, 1 beta, 1 beta', 1 gamma and 1 omega subunit. When a sigma factor is associated with the core the holoenzyme is formed, which can initiate transcription.

The enzyme catalyses RNA(n) + a ribonucleoside 5'-triphosphate = RNA(n+1) + diphosphate. Functionally, promotes RNA polymerase assembly. Latches the N- and C-terminal regions of the beta' subunit thereby facilitating its interaction with the beta and alpha subunits. This chain is DNA-directed RNA polymerase subunit omega, found in Synechococcus elongatus (strain ATCC 33912 / PCC 7942 / FACHB-805) (Anacystis nidulans R2).